Reading from the N-terminus, the 389-residue chain is Succinate--CoA ligase [ADP-forming] subunit beta (389 aa).

Residues 9–236 (RDMFEAHGVP…KDAADPLEAK (228 aa)) form the ATP-grasp domain. ATP contacts are provided by residues lysine 45, 52–54 (GRG), alanine 94, and glutamate 99. Positions 191 and 205 each coordinate Mg(2+). Substrate is bound by residues asparagine 256 and 318–320 (GIT).

It belongs to the succinate/malate CoA ligase beta subunit family. In terms of assembly, heterotetramer of two alpha and two beta subunits. Mg(2+) is required as a cofactor.

It carries out the reaction succinate + ATP + CoA = succinyl-CoA + ADP + phosphate. The enzyme catalyses GTP + succinate + CoA = succinyl-CoA + GDP + phosphate. Its pathway is carbohydrate metabolism; tricarboxylic acid cycle; succinate from succinyl-CoA (ligase route): step 1/1. Functionally, succinyl-CoA synthetase functions in the citric acid cycle (TCA), coupling the hydrolysis of succinyl-CoA to the synthesis of either ATP or GTP and thus represents the only step of substrate-level phosphorylation in the TCA. The beta subunit provides nucleotide specificity of the enzyme and binds the substrate succinate, while the binding sites for coenzyme A and phosphate are found in the alpha subunit. This chain is Succinate--CoA ligase [ADP-forming] subunit beta, found in Paenarthrobacter aurescens (strain TC1).